The sequence spans 336 residues: Inositol 2-dehydrogenase (336 aa).

This sequence belongs to the Gfo/Idh/MocA family. Homotetramer.

It catalyses the reaction myo-inositol + NAD(+) = scyllo-inosose + NADH + H(+). Functionally, involved in the oxidation of myo-inositol (MI) to 2-keto-myo-inositol (2KMI or 2-inosose). This chain is Inositol 2-dehydrogenase, found in Acidiphilium cryptum (strain JF-5).